A 432-amino-acid polypeptide reads, in one-letter code: Glutamate-1-semialdehyde 2,1-aminomutase 2 (432 aa).

Lysine 268 is modified (N6-(pyridoxal phosphate)lysine).

This sequence belongs to the class-III pyridoxal-phosphate-dependent aminotransferase family. HemL subfamily. Homodimer. Requires pyridoxal 5'-phosphate as cofactor.

Its subcellular location is the cytoplasm. The catalysed reaction is (S)-4-amino-5-oxopentanoate = 5-aminolevulinate. Its pathway is porphyrin-containing compound metabolism; protoporphyrin-IX biosynthesis; 5-aminolevulinate from L-glutamyl-tRNA(Glu): step 2/2. The sequence is that of Glutamate-1-semialdehyde 2,1-aminomutase 2 from Listeria monocytogenes serotype 4b (strain CLIP80459).